The sequence spans 595 residues: DNA primase (595 aa).

Residues 38 to 62 (CPFHDEKTPSFIVYPTRGHYHCYGC) form a CHC2-type zinc finger. Positions 251–331 (RRVILVEGQA…GITAIVCRLP (81 aa)) constitute a Toprim domain. 3 residues coordinate Mg(2+): glutamate 257, aspartate 302, and aspartate 304. Residues 430–441 (KGKKVSAKEPSS) are compositionally biased toward basic and acidic residues. A disordered region spans residues 430–451 (KGKKVSAKEPSSESKQTSTEGK).

This sequence belongs to the DnaG primase family. As to quaternary structure, monomer. Interacts with DnaB. The cofactor is Zn(2+). Mg(2+) is required as a cofactor.

The catalysed reaction is ssDNA + n NTP = ssDNA/pppN(pN)n-1 hybrid + (n-1) diphosphate.. RNA polymerase that catalyzes the synthesis of short RNA molecules used as primers for DNA polymerase during DNA replication. The sequence is that of DNA primase from Chlamydia trachomatis serovar D (strain ATCC VR-885 / DSM 19411 / UW-3/Cx).